The primary structure comprises 184 residues: ATP synthase subunit b, chloroplastic (184 aa).

Residues Leu-27 to Leu-49 traverse the membrane as a helical segment.

Belongs to the ATPase B chain family. As to quaternary structure, F-type ATPases have 2 components, F(1) - the catalytic core - and F(0) - the membrane proton channel. F(1) has five subunits: alpha(3), beta(3), gamma(1), delta(1), epsilon(1). F(0) has four main subunits: a(1), b(1), b'(1) and c(10-14). The alpha and beta chains form an alternating ring which encloses part of the gamma chain. F(1) is attached to F(0) by a central stalk formed by the gamma and epsilon chains, while a peripheral stalk is formed by the delta, b and b' chains.

Its subcellular location is the plastid. It is found in the chloroplast thylakoid membrane. In terms of biological role, f(1)F(0) ATP synthase produces ATP from ADP in the presence of a proton or sodium gradient. F-type ATPases consist of two structural domains, F(1) containing the extramembraneous catalytic core and F(0) containing the membrane proton channel, linked together by a central stalk and a peripheral stalk. During catalysis, ATP synthesis in the catalytic domain of F(1) is coupled via a rotary mechanism of the central stalk subunits to proton translocation. Its function is as follows. Component of the F(0) channel, it forms part of the peripheral stalk, linking F(1) to F(0). The protein is ATP synthase subunit b, chloroplastic of Piper cenocladum (Ant piper).